We begin with the raw amino-acid sequence, 309 residues long: Malate dehydrogenase (309 aa).

NAD(+) is bound by residues 6–11 (GSGRVG) and aspartate 31. Substrate-binding residues include arginine 80 and arginine 86. Residues asparagine 93 and 116-118 (TTN) each bind NAD(+). 2 residues coordinate substrate: asparagine 118 and arginine 149. The Proton acceptor role is filled by histidine 173.

The protein belongs to the LDH/MDH superfamily. In terms of assembly, homotetramer.

The catalysed reaction is (S)-malate + NAD(+) = oxaloacetate + NADH + H(+). Catalyzes the reversible oxidation of malate to oxaloacetate. Exhibits higher specific activity for oxaloacetate reduction than for malate oxidation in vitro. Has a strong preference for NAD. Can use NADPH for oxaloacetate reduction, but activity decreases more than 90%. No activity detected with NADP(+) and malate. The sequence is that of Malate dehydrogenase from Pyrobaculum islandicum (strain DSM 4184 / JCM 9189 / GEO3).